The sequence spans 77 residues: uncharacterized protein (77 aa).

This is an uncharacterized protein from Treponema pallidum (strain Nichols).